We begin with the raw amino-acid sequence, 640 residues long: Threonine--tRNA ligase (640 aa).

Residues 1 to 59 (MKIKVKLPDGKEKEYDRGITPAEIAKELGIKKAIGAVVNGELWDLKRPIENDCELRLVT) enclose the TGS domain. Positions 240-531 (DHRKLGPQLE…LIEHFAGAFP (292 aa)) are catalytic. Zn(2+)-binding residues include C332, H383, and H508.

The protein belongs to the class-II aminoacyl-tRNA synthetase family. In terms of assembly, homodimer. It depends on Zn(2+) as a cofactor.

Its subcellular location is the cytoplasm. It carries out the reaction tRNA(Thr) + L-threonine + ATP = L-threonyl-tRNA(Thr) + AMP + diphosphate + H(+). Functionally, catalyzes the attachment of threonine to tRNA(Thr) in a two-step reaction: L-threonine is first activated by ATP to form Thr-AMP and then transferred to the acceptor end of tRNA(Thr). Also edits incorrectly charged L-seryl-tRNA(Thr). In Thermotoga maritima (strain ATCC 43589 / DSM 3109 / JCM 10099 / NBRC 100826 / MSB8), this protein is Threonine--tRNA ligase.